The chain runs to 526 residues: MSDNKVEVDKRRTFAIISHPDAGKTTITEKVLLFGNALQKAGTVKGKKSGQHAKSDWMEMEKDRGISITTSVMQFPYGGALVNLLDTPGHEDFSEDTYRTLTAVDSCLMVIDSAKGVEDRTIKLMEVTRLRDTPIVTFMNKLDRDIRDPIELMDEVEDVLNIACAPITWPIGSGKEFKGVYHILRDEVVLYQSGMGHTIQERRVIEGIDNPELDKAIGSYAADLRDEMELVRGASNEFDHQAFLKGELTPVFFGTALGNFGVDHILDGIVEWAPKPLPRESDARMIMPDEEKFTGFVFKIQANMDPKHRDRVAFMRVCSGRYEQGMKMHHVRIGKDVNVSDALTFMAGDRERAEVAYPGDIIGLHNHGTIRIGDTFTQGEKFRFTGVPNFAPEMFRRIRLRDPLKQKQLLKGLVQLSEEGAVQVFRPLDSNDLIVGAVGVLQFEVVVGRLKSEYNVEAIYEGISVSTARWVYCKDERKLEEFRRKCSQNLALDGGDNLTYIAPTMVNLNLSMERYPDIEFAKTREH.

The 269-residue stretch at 9-277 (DKRRTFAIIS…GIVEWAPKPL (269 aa)) folds into the tr-type G domain. GTP is bound by residues 18–25 (SHPDAGKT), 86–90 (DTPGH), and 140–143 (NKLD).

This sequence belongs to the TRAFAC class translation factor GTPase superfamily. Classic translation factor GTPase family. PrfC subfamily.

It localises to the cytoplasm. Functionally, increases the formation of ribosomal termination complexes and stimulates activities of RF-1 and RF-2. It binds guanine nucleotides and has strong preference for UGA stop codons. It may interact directly with the ribosome. The stimulation of RF-1 and RF-2 is significantly reduced by GTP and GDP, but not by GMP. The chain is Peptide chain release factor 3 from Shewanella sp. (strain ANA-3).